The sequence spans 286 residues: B3 domain-containing protein REM20 (286 aa).

A DNA-binding region (TF-B3) is located at residues 9–102 (PRFFKVFLVE…TFEVSVFDRW (94 aa)). The segment at 117–161 (SDSDSDSVVEDEKDSTDVVEDDDDEDEDEDEDDDGSFDEDEEISQ) is disordered. The segment covering 119–159 (SDSDSVVEDEKDSTDVVEDDDDEDEDEDEDDDGSFDEDEEI) has biased composition (acidic residues).

The protein resides in the nucleus. The protein is B3 domain-containing protein REM20 (REM20) of Arabidopsis thaliana (Mouse-ear cress).